The primary structure comprises 346 residues: MDYKTAGVDVEAGRAFVNRIRKSVEATHRPEVVGGLGGFGGLMRLPAGLKKPLLVSGTDGVGTKLELAQDHGGHHNVGIDLVAMCVNDVITSGAEPLFFLDYMATGALSPEAMATVVEGIAEGCRGSGCALLGGETAEMPGFYPSGRYDLAGFCVAVVEEEQLIDGRQIRAGDRILGIASSGIHSNGFSLVRRVLTHAGANAETTFGPSNQPLIESLLTPTQLYGRLVKTLLETGTPIHGMAHITGGGLPENLPRCLPEGLQAIVTPSSWTRPAIYDWLQSHGDIPERDLWHTFNLGIGYCLIVPEEGVSIAEKACESEGMQAWTIGRIEASSGGDGKGSVLGLPA.

The protein belongs to the AIR synthase family.

It is found in the cytoplasm. It carries out the reaction 2-formamido-N(1)-(5-O-phospho-beta-D-ribosyl)acetamidine + ATP = 5-amino-1-(5-phospho-beta-D-ribosyl)imidazole + ADP + phosphate + H(+). The protein operates within purine metabolism; IMP biosynthesis via de novo pathway; 5-amino-1-(5-phospho-D-ribosyl)imidazole from N(2)-formyl-N(1)-(5-phospho-D-ribosyl)glycinamide: step 2/2. In Synechococcus sp. (strain CC9311), this protein is Phosphoribosylformylglycinamidine cyclo-ligase.